We begin with the raw amino-acid sequence, 723 residues long: Fatty acid oxidation complex subunit alpha (723 aa).

The segment at methionine 1–aspartate 189 is enoyl-CoA hydratase/isomerase. Aspartate 296 lines the substrate pocket. Positions asparagine 311–isoleucine 723 are 3-hydroxyacyl-CoA dehydrogenase. NAD(+)-binding positions include methionine 325, aspartate 344, valine 401–glutamate 403, lysine 408, and serine 430. Histidine 451 acts as the For 3-hydroxyacyl-CoA dehydrogenase activity in catalysis. Asparagine 454 serves as a coordination point for NAD(+). Substrate-binding residues include asparagine 501 and tyrosine 661.

In the N-terminal section; belongs to the enoyl-CoA hydratase/isomerase family. The protein in the C-terminal section; belongs to the 3-hydroxyacyl-CoA dehydrogenase family. As to quaternary structure, heterotetramer of two alpha chains (FadB) and two beta chains (FadA).

It catalyses the reaction a (3S)-3-hydroxyacyl-CoA + NAD(+) = a 3-oxoacyl-CoA + NADH + H(+). The enzyme catalyses a (3S)-3-hydroxyacyl-CoA = a (2E)-enoyl-CoA + H2O. It carries out the reaction a 4-saturated-(3S)-3-hydroxyacyl-CoA = a (3E)-enoyl-CoA + H2O. The catalysed reaction is (3S)-3-hydroxybutanoyl-CoA = (3R)-3-hydroxybutanoyl-CoA. It catalyses the reaction a (3Z)-enoyl-CoA = a 4-saturated (2E)-enoyl-CoA. The enzyme catalyses a (3E)-enoyl-CoA = a 4-saturated (2E)-enoyl-CoA. Its pathway is lipid metabolism; fatty acid beta-oxidation. Involved in the aerobic and anaerobic degradation of long-chain fatty acids via beta-oxidation cycle. Catalyzes the formation of 3-oxoacyl-CoA from enoyl-CoA via L-3-hydroxyacyl-CoA. It can also use D-3-hydroxyacyl-CoA and cis-3-enoyl-CoA as substrate. The chain is Fatty acid oxidation complex subunit alpha from Vibrio vulnificus (strain YJ016).